We begin with the raw amino-acid sequence, 514 residues long: 3-octaprenyl-4-hydroxybenzoate carboxy-lyase (514 aa).

Mn(2+) is bound at residue Asn-177. Residues 180-182 (IYR), 194-196 (RWL), and 199-200 (RG) contribute to the prenylated FMN site. Glu-243 contacts Mn(2+). The active-site Proton donor is the Asp-314.

The protein belongs to the UbiD family. In terms of assembly, homohexamer. Requires prenylated FMN as cofactor. Mn(2+) is required as a cofactor.

It is found in the cell membrane. The enzyme catalyses a 4-hydroxy-3-(all-trans-polyprenyl)benzoate + H(+) = a 2-(all-trans-polyprenyl)phenol + CO2. The protein operates within cofactor biosynthesis; ubiquinone biosynthesis. Catalyzes the decarboxylation of 3-octaprenyl-4-hydroxy benzoate to 2-octaprenylphenol, an intermediate step in ubiquinone biosynthesis. The polypeptide is 3-octaprenyl-4-hydroxybenzoate carboxy-lyase (Bordetella petrii (strain ATCC BAA-461 / DSM 12804 / CCUG 43448)).